The following is a 408-amino-acid chain: Secreted effector protein SseJ (408 aa).

The active-site Nucleophile is the Ser-151. Residues Asp-381 and His-384 contribute to the active site.

Belongs to the 'GDSL' lipolytic enzyme family. Interacts with RhoA and indirectly with SifA.

Its subcellular location is the secreted. It is found in the host cytoplasm. Functionally, effector proteins function to alter host cell physiology and promote bacterial survival in host tissues. This protein is required for endosomal tubulation and negatively regulates the formation of Salmonella-induced filaments (Sifs) in epithelial cells. Has both deacylase and esterification activities in vitro, but esterification is probably the dominant activity in host cells. Significantly contributes to cholesterol esterification, which reduces cellular cholesterol in cells and abrogates the ability of SifA to associate with cholesterol and LAMP-1 vesicles. The protein is Secreted effector protein SseJ (sseJ) of Salmonella typhimurium (strain LT2 / SGSC1412 / ATCC 700720).